Here is a 1051-residue protein sequence, read N- to C-terminus: Helicase POLQ-like (1051 aa).

The segment covering 1 to 10 (MANKHNLCKK) has biased composition (basic residues). Disordered regions lie at residues 1–28 (MANKHNLCKKRSLDLSEESTSESHAKRQ) and 61–112 (LFGT…APTD). Composition is skewed to polar residues over residues 64–78 (TQATTSTNKMTQSGS) and 89–102 (SFPSAQSVPPNSAS). A compositionally biased stretch (basic and acidic residues) spans 103–112 (KPDEASAPTD). The Helicase ATP-binding domain occupies 274–446 (LPAIRQRKNL…FLNADVYTRG (173 aa)). Position 287–294 (287–294 (LPTSGGKT)) interacts with ATP. Positions 391-394 (DELH) match the DEAH box motif. The region spanning 497-689 (HLAGLISECA…NEAVGLQSLI (193 aa)) is the Helicase C-terminal domain.

Belongs to the helicase family. SKI2 subfamily.

It is found in the nucleus. The protein localises to the chromosome. The catalysed reaction is Couples ATP hydrolysis with the unwinding of duplex DNA by translocating in the 3'-5' direction.. It carries out the reaction ATP + H2O = ADP + phosphate + H(+). Single-stranded 3'-5' DNA helicase that plays a key role in homology-driven double-strand break (DSB) repair. Involved in different DSB repair mechanisms that are guided by annealing of extensive stretches of complementary bases at break ends, such as microhomology-mediated end-joining (MMEJ), single-strand annealing (SSA) or synthesis-dependent strand annealing (SDSA). The polypeptide is Helicase POLQ-like (Drosophila melanogaster (Fruit fly)).